The chain runs to 137 residues: ATP synthase epsilon chain, chloroplastic (137 aa).

The protein belongs to the ATPase epsilon chain family. In terms of assembly, F-type ATPases have 2 components, CF(1) - the catalytic core - and CF(0) - the membrane proton channel. CF(1) has five subunits: alpha(3), beta(3), gamma(1), delta(1), epsilon(1). CF(0) has three main subunits: a, b and c.

It is found in the plastid. It localises to the chloroplast thylakoid membrane. Functionally, produces ATP from ADP in the presence of a proton gradient across the membrane. The chain is ATP synthase epsilon chain, chloroplastic from Agrostis stolonifera (Creeping bentgrass).